Consider the following 321-residue polypeptide: Sideroflexin-3 (321 aa).

Met-1 carries the post-translational modification N-acetylmethionine. 4 consecutive transmembrane segments (helical) span residues 146 to 164 (LGMA…ALGL), 174 to 194 (LVGR…NIPL), 226 to 246 (FQVV…PPVI), and 266 to 286 (LQMG…CALF).

The protein belongs to the sideroflexin family.

It is found in the mitochondrion membrane. The enzyme catalyses L-serine(in) = L-serine(out). In terms of biological role, mitochondrial serine transporter that mediates transport of serine into mitochondria, an important step of the one-carbon metabolism pathway. Mitochondrial serine is converted to glycine and formate, which then exits to the cytosol where it is used to generate the charged folates that serve as one-carbon donors. The chain is Sideroflexin-3 (SFXN3) from Bos taurus (Bovine).